The sequence spans 114 residues: Large ribosomal subunit protein bL17 (114 aa).

Belongs to the bacterial ribosomal protein bL17 family. As to quaternary structure, part of the 50S ribosomal subunit. Contacts protein L32.

This is Large ribosomal subunit protein bL17 from Clostridium acetobutylicum (strain ATCC 824 / DSM 792 / JCM 1419 / IAM 19013 / LMG 5710 / NBRC 13948 / NRRL B-527 / VKM B-1787 / 2291 / W).